A 1343-amino-acid polypeptide reads, in one-letter code: DNA-directed RNA polymerase subunit beta (1343 aa).

It belongs to the RNA polymerase beta chain family. The RNAP catalytic core consists of 2 alpha, 1 beta, 1 beta' and 1 omega subunit. When a sigma factor is associated with the core the holoenzyme is formed, which can initiate transcription.

It carries out the reaction RNA(n) + a ribonucleoside 5'-triphosphate = RNA(n+1) + diphosphate. Functionally, DNA-dependent RNA polymerase catalyzes the transcription of DNA into RNA using the four ribonucleoside triphosphates as substrates. The protein is DNA-directed RNA polymerase subunit beta of Shewanella denitrificans (strain OS217 / ATCC BAA-1090 / DSM 15013).